A 142-amino-acid polypeptide reads, in one-letter code: Taurine up-regulated 1 protein (142 aa).

An N-terminal signal peptide occupies residues 1-40 (MARPPPLPGLVGRRSGRAVDRAIGWRLFLLLWHPALGAQA). The Extracellular segment spans residues 41–123 (RPPRRAPGGR…ARTQLEGQEG (83 aa)). A helical membrane pass occupies residues 124 to 140 (AGGWLVVGFLLCLFLLM). The Cytoplasmic portion of the chain corresponds to 141-142 (PP).

Widely expressed in the adult with highest levels in placenta and testis. Also expressed in a number of embryonic tissues at multiple embryonic stages.

Its subcellular location is the nucleus membrane. It is found in the mitochondrion membrane. The protein localises to the cytoplasm. The sequence is that of Taurine up-regulated 1 protein from Mus musculus (Mouse).